Reading from the N-terminus, the 198-residue chain is Peptidyl-tRNA hydrolase (198 aa).

Tyr-14 serves as a coordination point for tRNA. His-19 functions as the Proton acceptor in the catalytic mechanism. Residues Tyr-64, Asn-66, and Asn-113 each contribute to the tRNA site.

This sequence belongs to the PTH family. Monomer.

Its subcellular location is the cytoplasm. The catalysed reaction is an N-acyl-L-alpha-aminoacyl-tRNA + H2O = an N-acyl-L-amino acid + a tRNA + H(+). Hydrolyzes ribosome-free peptidyl-tRNAs (with 1 or more amino acids incorporated), which drop off the ribosome during protein synthesis, or as a result of ribosome stalling. In terms of biological role, catalyzes the release of premature peptidyl moieties from peptidyl-tRNA molecules trapped in stalled 50S ribosomal subunits, and thus maintains levels of free tRNAs and 50S ribosomes. The chain is Peptidyl-tRNA hydrolase from Acidobacterium capsulatum (strain ATCC 51196 / DSM 11244 / BCRC 80197 / JCM 7670 / NBRC 15755 / NCIMB 13165 / 161).